We begin with the raw amino-acid sequence, 590 residues long: UvrABC system protein C (590 aa).

In terms of domain architecture, GIY-YIG spans 14-91 (EQPGCYLMKD…IKKHDPKYNV (78 aa)). Positions 196-231 (EDVKRELAEKMHEAAETLEFERAKEYRDQIAAIEMT) constitute a UVR domain.

It belongs to the UvrC family. In terms of assembly, interacts with UvrB in an incision complex.

The protein localises to the cytoplasm. The UvrABC repair system catalyzes the recognition and processing of DNA lesions. UvrC both incises the 5' and 3' sides of the lesion. The N-terminal half is responsible for the 3' incision and the C-terminal half is responsible for the 5' incision. The polypeptide is UvrABC system protein C (Geobacillus kaustophilus (strain HTA426)).